The primary structure comprises 133 residues: S-adenosylmethionine decarboxylase proenzyme (133 aa).

Serine 65 (schiff-base intermediate with substrate; via pyruvic acid) is an active-site residue. At serine 65 the chain carries Pyruvic acid (Ser); by autocatalysis. Catalysis depends on histidine 70, which acts as the Proton acceptor; for processing activity. Catalysis depends on cysteine 85, which acts as the Proton donor; for catalytic activity.

It belongs to the prokaryotic AdoMetDC family. Type 1 subfamily. Heterotetramer of two alpha and two beta chains arranged as a dimer of alpha/beta heterodimers. Pyruvate serves as cofactor. Is synthesized initially as an inactive proenzyme. Formation of the active enzyme involves a self-maturation process in which the active site pyruvoyl group is generated from an internal serine residue via an autocatalytic post-translational modification. Two non-identical subunits are generated from the proenzyme in this reaction, and the pyruvate is formed at the N-terminus of the alpha chain, which is derived from the carboxyl end of the proenzyme. The post-translation cleavage follows an unusual pathway, termed non-hydrolytic serinolysis, in which the side chain hydroxyl group of the serine supplies its oxygen atom to form the C-terminus of the beta chain, while the remainder of the serine residue undergoes an oxidative deamination to produce ammonia and the pyruvoyl group blocking the N-terminus of the alpha chain.

The catalysed reaction is S-adenosyl-L-methionine + H(+) = S-adenosyl 3-(methylsulfanyl)propylamine + CO2. The protein operates within amine and polyamine biosynthesis; S-adenosylmethioninamine biosynthesis; S-adenosylmethioninamine from S-adenosyl-L-methionine: step 1/1. Catalyzes the decarboxylation of S-adenosylmethionine to S-adenosylmethioninamine (dcAdoMet), the propylamine donor required for the synthesis of the polyamines spermine and spermidine from the diamine putrescine. This is S-adenosylmethionine decarboxylase proenzyme from Brevibacillus brevis (strain 47 / JCM 6285 / NBRC 100599).